A 198-amino-acid chain; its full sequence is Recombination protein RecR (198 aa).

The C4-type zinc finger occupies 57–72; the sequence is CTVCGHITDTDPCYIC. One can recognise a Toprim domain in the interval 80 to 175; sequence TTICVVQDPK…KVTRIAHGLP (96 aa).

Belongs to the RecR family.

Functionally, may play a role in DNA repair. It seems to be involved in an RecBC-independent recombinational process of DNA repair. It may act with RecF and RecO. This is Recombination protein RecR from Geobacillus sp. (strain WCH70).